Consider the following 103-residue polypeptide: MTQDYELVVKGVRNFENKVTVTVALQDKERFDGEIFDLDVAMDRVEGAALEFYEAAARRSVRQVFLEVAEKLSEKVESYLQHQYSFKIENPANKHERPHHKYL.

This is an uncharacterized protein from Escherichia coli (strain K12).